Reading from the N-terminus, the 172-residue chain is Transmembrane protein 91 (172 aa).

Residues 1–97 (MDNSSIQELQ…SPLLPHDHLG (97 aa)) are Extracellular-facing. The disordered stretch occupies residues 60–86 (GLGEPETPDFEDTLSSDSDSDDDGGDR). Residues 65 to 83 (ETPDFEDTLSSDSDSDDDG) show a composition bias toward acidic residues. Residues 98–118 (LAVFSVLCCFWPVGIAAFCLA) form a helical membrane-spanning segment. The Cytoplasmic portion of the chain corresponds to 119-139 (HKTNKAWAKGDVQGAGAASRR). The helical transmembrane segment at 140–160 (AFLLGVLAVGLGLCTYAAALV) threads the bilayer. The Extracellular segment spans residues 161 to 172 (TLAAYLASRDPP).

Belongs to the CD225/Dispanin family.

The protein localises to the membrane. This is Transmembrane protein 91 (Tmem91) from Mus musculus (Mouse).